The primary structure comprises 117 residues: Glycine cleavage system H-like protein (117 aa).

In terms of domain architecture, Lipoyl-binding spans 21–103; it reads IVKLGLSSQM…ESEGWFVVLQ (83 aa). Lys-62 is modified (N6-lipoyllysine).

This sequence belongs to the GcvH family. It depends on (R)-lipoate as a cofactor.

The chain is Glycine cleavage system H-like protein from Chlamydia trachomatis serovar L2 (strain ATCC VR-902B / DSM 19102 / 434/Bu).